The primary structure comprises 934 residues: Complement component C6 (934 aa).

A signal peptide spans 1–21 (MARRSVLYFILLNALINKGQA). Disulfide bonds link cysteine 22-cysteine 61, cysteine 24-cysteine 65, cysteine 35-cysteine 73, cysteine 39-cysteine 78, cysteine 82-cysteine 117, cysteine 93-cysteine 127, cysteine 96-cysteine 133, cysteine 140-cysteine 151, cysteine 146-cysteine 164, cysteine 158-cysteine 173, and cysteine 180-cysteine 218. TSP type-1 domains lie at 22-79 (CFCD…QRCP) and 81-134 (NCLL…KLCK). A glycan (C-linked (Man) tryptophan) is linked at tryptophan 29. A C-linked (Man) tryptophan; partial glycan is attached at tryptophan 32. O-linked (Fuc...) threonine glycosylation is present at threonine 38. The C-linked (Man) tryptophan; partial glycan is linked to tryptophan 90. One can recognise an LDL-receptor class A domain in the interval 138-175 (ADCKNKFRCDSGRCIARKLECNGENDCGDNSDERDCGR). Residues leucine 156, asparagine 159, glutamate 161, aspartate 163, aspartate 169, and glutamate 170 each coordinate Ca(2+). The region spanning 176–522 (TKAVCTRKYN…EYAAKFDPCQ (347 aa)) is the MACPF domain. A beta stranded transmembrane segment spans residues 278 to 290 (SFSVPIFYSSKRS). Asparagine 324 carries N-linked (GlcNAc...) asparagine glycosylation. O-linked (Fuc...) threonine glycosylation occurs at threonine 392. 16 disulfides stabilise this stretch: cysteine 399–cysteine 420, cysteine 499–cysteine 623, cysteine 521–cysteine 570, cysteine 523–cysteine 539, cysteine 526–cysteine 541, cysteine 543–cysteine 552, cysteine 577–cysteine 611, cysteine 589–cysteine 601, cysteine 644–cysteine 686, cysteine 672–cysteine 699, cysteine 704–cysteine 746, cysteine 732–cysteine 761, cysteine 773–cysteine 823, cysteine 784–cysteine 801, cysteine 786–cysteine 837, and cysteine 793–cysteine 816. Residues 402 to 415 (IETKKRVLFAKKTK) traverse the membrane as a beta stranded segment. In terms of domain architecture, EGF-like spans 523 to 553 (CAPCPNNGRPTLSGTECLCVCQSGTYGENCE). Residues 565–612 (DGQWGCWSSWSTCDATYKRSRTRECNNPAPQRGGKRCEGEKRQEEDCT) form the TSP type-1 3 domain. Residues tryptophan 568, tryptophan 571, and tryptophan 574 are each glycosylated (C-linked (Man) tryptophan; partial). CCP regions lie at residues 611–688 (CTFS…RCLP) and 689–765 (DGTW…EKDT). Sushi domains lie at 642 to 701 (SGCP…ECQR) and 702 to 763 (TECI…TCEK). Positions 642–934 (SGCPQPVPPE…EILHPGKCLA (293 aa)) are C5b-binding domain. The segment at 766 to 840 (LTKLKGHCQL…FLHIGSCQDG (75 aa)) is factor I module (FIM) 1. A Kazal-like 1 domain is found at 780–839 (SGSECICMSPEEDCSHHSEDLCVFDTDSNDYFTSPACKFLAEKCLNNQQLHFLHIGSCQD). N-linked (GlcNAc...) asparagine glycosylation is present at asparagine 855. A factor I module (FIM) 2 region spans residues 858 to 934 (KKESCGYDTC…EILHPGKCLA (77 aa)). Intrachain disulfides connect cysteine 862/cysteine 873, cysteine 867/cysteine 919, cysteine 880/cysteine 897, cysteine 882/cysteine 932, and cysteine 888/cysteine 912. The 59-residue stretch at 876-934 (STSKCVCLLPPQCFKGGNQLYCVKMGSSTSEKTLNICEVGTIRCANRKMEILHPGKCLA) folds into the Kazal-like 2 domain.

This sequence belongs to the complement C6/C7/C8/C9 family. In terms of assembly, component of the membrane attack complex (MAC), composed of complement C5b, C6, C7, C8A, C8B, C8G and multiple copies of the pore-forming subunit C9. In terms of processing, all cysteine residues are assumed to be cross-linked to one another. Individual modules containing an even number of conserved cysteine residues are supposed to have disulfide linkages only within the same module.

It is found in the secreted. It localises to the target cell membrane. Its activity is regulated as follows. Membrane attack complex (MAC) assembly is inhibited by CD59, thereby protecting self-cells from damage during complement activation. MAC assembly is also inhibited by clusterin (CLU) chaperones that inhibit polymerization of C9. Functionally, component of the membrane attack complex (MAC), a multiprotein complex activated by the complement cascade, which inserts into a target cell membrane and forms a pore, leading to target cell membrane rupture and cell lysis. The MAC is initiated by proteolytic cleavage of C5 into complement C5b in response to the classical, alternative, lectin and GZMK complement pathways. The complement pathways consist in a cascade of proteins that leads to phagocytosis and breakdown of pathogens and signaling that strengthens the adaptive immune system. Together with component C5b, involved in MAC complex assembly: complement C5b and C6 associate with the outer leaflet of target cell membrane, reducing the energy for membrane bending. In Homo sapiens (Human), this protein is Complement component C6.